A 187-amino-acid polypeptide reads, in one-letter code: Photosystem I assembly protein Ycf4 (187 aa).

2 consecutive transmembrane segments (helical) span residues 23–43 (INYFWSFSIFFGAFGFLIVGI) and 70–90 (FYGIAGIFLSFYLWFTMILGV).

It belongs to the Ycf4 family.

Its subcellular location is the plastid. It is found in the chloroplast thylakoid membrane. Seems to be required for the assembly of the photosystem I complex. The polypeptide is Photosystem I assembly protein Ycf4 (Chara vulgaris (Common stonewort)).